We begin with the raw amino-acid sequence, 491 residues long: NADH-quinone oxidoreductase subunit N (491 aa).

Helical transmembrane passes span 11–31, 38–58, 74–94, 106–126, 128–148, 163–183, 206–226, 243–263, 272–292, 301–321, 336–356, 379–399, 410–430, and 465–485; these read ATAEIFVAVMALVIMLATTFA, LAYGLTLVTLIGAAIITYNTA, LLGDVLKLLIYFSMAVALLYG, PEYYVLALLMTLGMMVMVTSN, LLSMYIGLELMSLSLYALVAF, FVLGALASGLLLYGMSMLYGA, LLFGLVFLMAGICFKLGVVPF, LIIATAPKLAAFAMAVRLLVW, WQTMLMFVAVLSIVLGNLAAI, LAYSGISHMGFMLLGLLSGVV, MFYAISYVIMSLASFGMIILL, FAAMMMFVMFSMAGIPFFIGF, VAAGYIWVAVVAVLMSVIGAF, and LAIAAIGLAPQGVMTLCTFVL.

Belongs to the complex I subunit 2 family. As to quaternary structure, NDH-1 is composed of 14 different subunits. Subunits NuoA, H, J, K, L, M, N constitute the membrane sector of the complex.

It localises to the cell inner membrane. It carries out the reaction a quinone + NADH + 5 H(+)(in) = a quinol + NAD(+) + 4 H(+)(out). NDH-1 shuttles electrons from NADH, via FMN and iron-sulfur (Fe-S) centers, to quinones in the respiratory chain. The immediate electron acceptor for the enzyme in this species is believed to be ubiquinone. Couples the redox reaction to proton translocation (for every two electrons transferred, four hydrogen ions are translocated across the cytoplasmic membrane), and thus conserves the redox energy in a proton gradient. This chain is NADH-quinone oxidoreductase subunit N, found in Azoarcus sp. (strain BH72).